Consider the following 397-residue polypeptide: ATP-dependent RNA helicase eIF4A (397 aa).

Positions 23 to 51 (YKFDDLNLKPNIVRGIFGYGYETPSAIQQ) match the Q motif motif. The Helicase ATP-binding domain maps to 54–224 (ILPITEGRDV…TKFMNNPVRI (171 aa)). An ATP-binding site is contributed by 67–74 (AQSGTGKT). The DEAD box signature appears at 172 to 175 (DEAD). Residues 235 to 396 (GIKQFYINVE…EMPADIGALF (162 aa)) form the Helicase C-terminal domain.

This sequence belongs to the DEAD box helicase family. eIF4A subfamily. In terms of assembly, component of the eIF4F complex, which composition varies with external and internal environmental conditions. It is composed of at least eIF4A, eIF4E and eIF4G.

The protein localises to the cytoplasm. The enzyme catalyses ATP + H2O = ADP + phosphate + H(+). In terms of biological role, ATP-dependent RNA helicase which is a subunit of the eIF4F complex involved in cap recognition and is required for mRNA binding to ribosome. In the current model of translation initiation, eIF4A unwinds RNA secondary structures in the 5'-UTR of mRNAs which is necessary to allow efficient binding of the small ribosomal subunit, and subsequent scanning for the initiator codon. The sequence is that of ATP-dependent RNA helicase eIF4A (TIF1) from Scheffersomyces stipitis (strain ATCC 58785 / CBS 6054 / NBRC 10063 / NRRL Y-11545) (Yeast).